Reading from the N-terminus, the 304-residue chain is Ribonuclease Z (304 aa).

Residues His63, His65, Asp67, His68, His141, Asp208, and His266 each contribute to the Zn(2+) site. Catalysis depends on Asp67, which acts as the Proton acceptor.

Belongs to the RNase Z family. As to quaternary structure, homodimer. Zn(2+) is required as a cofactor.

It carries out the reaction Endonucleolytic cleavage of RNA, removing extra 3' nucleotides from tRNA precursor, generating 3' termini of tRNAs. A 3'-hydroxy group is left at the tRNA terminus and a 5'-phosphoryl group is left at the trailer molecule.. Its function is as follows. Zinc phosphodiesterase, which displays some tRNA 3'-processing endonuclease activity. Probably involved in tRNA maturation, by removing a 3'-trailer from precursor tRNA. The polypeptide is Ribonuclease Z (Chlamydia trachomatis serovar L2 (strain ATCC VR-902B / DSM 19102 / 434/Bu)).